Here is a 184-residue protein sequence, read N- to C-terminus: Threonylcarbamoyl-AMP synthase (184 aa).

The YrdC-like domain occupies 3–184 (AWFIQKAVSV…DAATGAILRQ (182 aa)).

Belongs to the SUA5 family. TsaC subfamily.

The protein resides in the cytoplasm. It carries out the reaction L-threonine + hydrogencarbonate + ATP = L-threonylcarbamoyladenylate + diphosphate + H2O. Required for the formation of a threonylcarbamoyl group on adenosine at position 37 (t(6)A37) in tRNAs that read codons beginning with adenine. Catalyzes the conversion of L-threonine, HCO(3)(-)/CO(2) and ATP to give threonylcarbamoyl-AMP (TC-AMP) as the acyladenylate intermediate, with the release of diphosphate. In Hahella chejuensis (strain KCTC 2396), this protein is Threonylcarbamoyl-AMP synthase.